Reading from the N-terminus, the 392-residue chain is Formate-dependent phosphoribosylglycinamide formyltransferase (392 aa).

N(1)-(5-phospho-beta-D-ribosyl)glycinamide is bound by residues Glu-22 to Leu-23 and Glu-82. Residues Arg-114, Lys-155, Ser-160–Gln-165, Glu-195–Val-198, and Glu-203 each bind ATP. Residues Arg-119–Leu-308 form the ATP-grasp domain. Residues Glu-267 and Glu-279 each coordinate Mg(2+). N(1)-(5-phospho-beta-D-ribosyl)glycinamide contacts are provided by residues Asp-286, Lys-355, and Arg-362–Arg-363.

The protein belongs to the PurK/PurT family. Homodimer.

It carries out the reaction N(1)-(5-phospho-beta-D-ribosyl)glycinamide + formate + ATP = N(2)-formyl-N(1)-(5-phospho-beta-D-ribosyl)glycinamide + ADP + phosphate + H(+). It participates in purine metabolism; IMP biosynthesis via de novo pathway; N(2)-formyl-N(1)-(5-phospho-D-ribosyl)glycinamide from N(1)-(5-phospho-D-ribosyl)glycinamide (formate route): step 1/1. Functionally, involved in the de novo purine biosynthesis. Catalyzes the transfer of formate to 5-phospho-ribosyl-glycinamide (GAR), producing 5-phospho-ribosyl-N-formylglycinamide (FGAR). Formate is provided by PurU via hydrolysis of 10-formyl-tetrahydrofolate. This is Formate-dependent phosphoribosylglycinamide formyltransferase from Salmonella typhimurium (strain LT2 / SGSC1412 / ATCC 700720).